We begin with the raw amino-acid sequence, 2471 residues long: Neurogenic locus notch homolog protein 2 (2471 aa).

Residues 1–25 (MPALRPALLWALLALWLCCAAPAHA) form the signal peptide. 4 consecutive EGF-like domains span residues 26 to 63 (LQCRDGYEPCVNEGMCVTYHNGTGYCKCPEGFLGEYCQ), 64 to 102 (HRDPCEKNRCQNGGTCVAQAMLGKATCRCASGFTGEDCQ), 105 to 143 (TSHPCFVSRPCLNGGTCHMLSRDTYECTCQVGFTGKECQ), and 144 to 180 (WTDACLSHPCANGSTCTTVANQFSCKCLTGFTGQKCE). Over 26–1677 (LQCRDGYEPC…SESLTPERTQ (1652 aa)) the chain is Extracellular. 84 disulfides stabilise this stretch: cysteine 28–cysteine 41, cysteine 35–cysteine 51, cysteine 53–cysteine 62, cysteine 68–cysteine 79, cysteine 73–cysteine 90, cysteine 92–cysteine 101, cysteine 109–cysteine 121, cysteine 115–cysteine 131, cysteine 133–cysteine 142, cysteine 148–cysteine 159, cysteine 153–cysteine 168, cysteine 170–cysteine 179, cysteine 186–cysteine 198, cysteine 192–cysteine 207, cysteine 209–cysteine 218, cysteine 225–cysteine 236, cysteine 230–cysteine 246, cysteine 248–cysteine 257, cysteine 264–cysteine 275, cysteine 269–cysteine 284, cysteine 286–cysteine 295, cysteine 302–cysteine 315, cysteine 309–cysteine 324, cysteine 326–cysteine 335, cysteine 342–cysteine 353, cysteine 347–cysteine 362, cysteine 364–cysteine 373, cysteine 379–cysteine 390, cysteine 384–cysteine 401, cysteine 403–cysteine 412, cysteine 419–cysteine 433, cysteine 427–cysteine 442, cysteine 444–cysteine 453, cysteine 460–cysteine 471, cysteine 465–cysteine 480, cysteine 482–cysteine 491, cysteine 498–cysteine 509, cysteine 503–cysteine 518, cysteine 520–cysteine 529, cysteine 536–cysteine 547, cysteine 541–cysteine 556, cysteine 558–cysteine 567, cysteine 574–cysteine 584, cysteine 579–cysteine 593, cysteine 595–cysteine 604, cysteine 611–cysteine 622, cysteine 616–cysteine 631, cysteine 633–cysteine 642, cysteine 649–cysteine 659, cysteine 654–cysteine 668, cysteine 670–cysteine 679, cysteine 686–cysteine 697, cysteine 691–cysteine 706, cysteine 708–cysteine 717, cysteine 724–cysteine 734, cysteine 729–cysteine 743, cysteine 745–cysteine 754, cysteine 761–cysteine 772, cysteine 766–cysteine 781, cysteine 783–cysteine 792, cysteine 799–cysteine 810, cysteine 804–cysteine 819, cysteine 821–cysteine 830, cysteine 837–cysteine 848, cysteine 842–cysteine 859, cysteine 861–cysteine 870, cysteine 877–cysteine 888, cysteine 882–cysteine 897, cysteine 899–cysteine 908, cysteine 915–cysteine 926, cysteine 920–cysteine 935, cysteine 937–cysteine 946, cysteine 953–cysteine 964, cysteine 958–cysteine 973, cysteine 975–cysteine 984, cysteine 991–cysteine 1002, cysteine 996–cysteine 1011, cysteine 1013–cysteine 1022, cysteine 1029–cysteine 1040, cysteine 1034–cysteine 1049, cysteine 1051–cysteine 1060, cysteine 1067–cysteine 1078, cysteine 1072–cysteine 1087, and cysteine 1089–cysteine 1098. The N-linked (GlcNAc...) asparagine glycan is linked to asparagine 46. The N-linked (GlcNAc...) asparagine glycan is linked to asparagine 155. In terms of domain architecture, EGF-like 5; calcium-binding spans 182 to 219 (DVNECDIPGHCQHGGTCLNLPGSYQCQCPQGFTGQYCD). One can recognise an EGF-like 6 domain in the interval 221-258 (LYVPCAPSPCVNGGTCRQTGDFTFECNCLPGFEGSTCE). The EGF-like 7; calcium-binding domain maps to 260–296 (NIDDCPNHRCQNGGVCVDGVNTYNCRCPPQWTGQFCT). One can recognise an EGF-like 8; calcium-binding domain in the interval 298 to 336 (DVDECLLQPNACQNGGTCANRNGGYGCVCVNGWSGDDCS). An EGF-like 9; calcium-binding domain is found at 338–374 (NIDDCAFASCTPGSTCIDRVASFSCMCPEGKAGLLCH). Residues 375–413 (LDDACISNPCHKGALCDTNPLNGQYICTCPQGYKGADCT) enclose the EGF-like 10 domain. The region spanning 415 to 454 (DVDECAMANSNPCEHAGKCVNTDGAFHCECLKGYAGPRCE) is the EGF-like 11; calcium-binding domain. The EGF-like 12; calcium-binding domain maps to 456–492 (DINECHSDPCQNDATCLDKIGGFTCLCMPGFKGVHCE). In terms of domain architecture, EGF-like 13; calcium-binding spans 494–530 (EINECQSNPCVNNGQCVDKVNRFQCLCPPGFTGPVCQ). The EGF-like 14; calcium-binding domain occupies 532 to 568 (DIDDCSSTPCLNGAKCIDHPNGYECQCATGFTGVLCE). The region spanning 570–605 (NIDNCDPDPCHHGQCQDGIDSYTCICNPGYMGAICS) is the EGF-like 15; calcium-binding domain. Residues 607–643 (QIDECYSSPCLNDGRCIDLVNGYQCNCQPGTSGVNCE) enclose the EGF-like 16; calcium-binding domain. A glycan (O-linked (Glc...) serine; alternate) is linked at serine 613. Serine 613 is a glycosylation site (O-linked (Xyl...) serine; alternate). An EGF-like 17; calcium-binding domain is found at 645-680 (NFDDCASNPCIHGICMDGINRYSCVCSPGFTGQRCN). The region spanning 682–718 (DIDECASNPCRKGATCINGVNGFRCICPEGPHHPSCY) is the EGF-like 18; calcium-binding domain. One can recognise an EGF-like 19 domain in the interval 720 to 755 (QVNECLSNPCIHGNCTGGLSGYKCLCDAGWVGINCE). Residue asparagine 733 is glycosylated (N-linked (GlcNAc...) asparagine). Residues 757–793 (DKNECLSNPCQNGGTCDNLVNGYRCTCKKGFKGYNCQ) form the EGF-like 20; calcium-binding domain. The region spanning 795 to 831 (NIDECASNPCLNQGTCFDDISGYTCHCVLPYTGKNCQ) is the EGF-like 21; calcium-binding domain. Residues 833–871 (VLAPCSPNPCENAAVCKESPNFESYTCLCAPGWQGQRCT) form the EGF-like 22 domain. One can recognise an EGF-like 23; calcium-binding domain in the interval 873 to 909 (DIDECISKPCMNHGLCHNTQGSYMCECPPGFSGMDCE). Positions 911–947 (DIDDCLANPCQNGGSCMDGVNTFSCLCLPGFTGDKCQ) constitute an EGF-like 24; calcium-binding domain. Residues 949–985 (DMNECLSEPCKNGGTCSDYVNSYTCKCQAGFDGVHCE) enclose the EGF-like 25; calcium-binding domain. Positions 987-1023 (NINECTESSCFNGGTCVDGINSFSCLCPVGFTGSFCL) constitute an EGF-like 26; calcium-binding domain. Residues 1025-1061 (EINECSSHPCLNEGTCVDGLGTYRCSCPLGYTGKNCQ) enclose the EGF-like 27; calcium-binding domain. EGF-like domains follow at residues 1063–1099 (LVNLCSRSPCKNKGTCVQKKAESQCLCPSGWAGAYCD) and 1101–1147 (PNVS…SYCE). N-linked (GlcNAc...) asparagine glycosylation occurs at asparagine 1102. 24 disulfides stabilise this stretch: cysteine 1105-cysteine 1126, cysteine 1120-cysteine 1135, cysteine 1137-cysteine 1146, cysteine 1153-cysteine 1164, cysteine 1158-cysteine 1173, cysteine 1175-cysteine 1184, cysteine 1191-cysteine 1202, cysteine 1196-cysteine 1211, cysteine 1213-cysteine 1222, cysteine 1229-cysteine 1241, cysteine 1235-cysteine 1250, cysteine 1252-cysteine 1261, cysteine 1268-cysteine 1281, cysteine 1273-cysteine 1290, cysteine 1292-cysteine 1301, cysteine 1308-cysteine 1319, cysteine 1313-cysteine 1331, cysteine 1333-cysteine 1342, cysteine 1378-cysteine 1389, cysteine 1383-cysteine 1400, cysteine 1402-cysteine 1411, cysteine 1425-cysteine 1448, cysteine 1430-cysteine 1443, and cysteine 1439-cysteine 1455. One can recognise an EGF-like 30; calcium-binding domain in the interval 1149–1185 (QLDECASNPCQHGATCSDFIGGYRCECVPGYQGVNCE). The EGF-like 31; calcium-binding domain occupies 1187-1223 (EVDECQNQPCQNGGTCIDLVNHFKCSCPPGTRGLLCE). An EGF-like 32; calcium-binding domain is found at 1225–1262 (NIDDCARGPHCLNGGQCMDRIGGYSCRCLPGFAGERCE). 3 consecutive EGF-like domains span residues 1264–1302 (DINECLSNPCSSEGSLDCIQLTNDYLCVCRSAFTGRHCE), 1304–1343 (FVDVCPQMPCLNGGTCAVASNMPDGFICRCPPGFSGARCQ), and 1374–1412 (CESGCASSPCQHGGSCHPQRQPPYYSCQCAPPFSGSRCE). LNR repeat units follow at residues 1425–1465 (CLSQ…PWAN), 1466–1502 (CSSPLPCWDYINNQCDELCNTVECLFDNFECQGNSKT), and 1503–1544 (CKYD…NLAE). The segment at 1425–1677 (CLSQYCADKA…SESLTPERTQ (253 aa)) is negative regulatory region (NRR). An N-linked (GlcNAc...) asparagine glycan is attached at asparagine 1465. 7 cysteine pairs are disulfide-bonded: cysteine 1466–cysteine 1489, cysteine 1472–cysteine 1484, cysteine 1480–cysteine 1496, cysteine 1503–cysteine 1527, cysteine 1509–cysteine 1522, cysteine 1518–cysteine 1534, and cysteine 1632–cysteine 1639. A helical transmembrane segment spans residues 1678–1698 (LLYLLAVAVVIILFIILLGVI). Topologically, residues 1699–2471 (MAKRKRKHGS…PPHNNMQVYA (773 aa)) are cytoplasmic. Residue threonine 1716 is modified to Phosphothreonine. Residues 1754-1788 (TSEHWVDDEGPQPKKVKAEDEALLSEEDDPIDRRP) are disordered. The segment covering 1774–1783 (EALLSEEDDP) has biased composition (acidic residues). Serine 1778 carries the post-translational modification Phosphoserine. Position 1802 is a phosphothreonine (threonine 1802). Phosphoserine is present on serine 1804. Residue threonine 1808 is modified to Phosphothreonine. ANK repeat units lie at residues 1827–1871 (DGCT…SLQA), 1876–1905 (TGEMALHLAARYSRADAAKRLLDAGADANA), 1909–1939 (MGRCPLHAAVAADAQGVFQILIRNRVTDLDA), 1943–1972 (DGTTPLILAARLAVEGMVAELINCQADVNA), 1976–2005 (HGKSALHWAAAVNNVEATLLLLKNGANRDM), and 2009–2038 (KEETPLFLAAREGSYEAAKILLDHFANRDI). 2 positions are modified to phosphoserine: serine 1842 and serine 1845. Serine 2070, serine 2078, and serine 2081 each carry phosphoserine. Disordered regions lie at residues 2091–2168 (FLSL…TSSP) and 2380–2471 (VGKY…QVYA). Position 2097 is a phosphothreonine (threonine 2097). Residues 2098–2107 (PMGKKSRRPS) are compositionally biased toward basic residues. Composition is skewed to polar residues over residues 2108-2117 (AKSTMPTSLP), 2137-2150 (EKVQLSESSVTLSP), 2159-2168 (TYVSDTTSSP), and 2388-2406 (SQHSYASSNAAERTPSHSG). Positions 2417 to 2445 (PSPESPDQWSSSSPHSASDWSDVTTSPTP) are enriched in low complexity.

The protein belongs to the NOTCH family. In terms of assembly, heterodimer of a C-terminal fragment N(TM) and an N-terminal fragment N(EC) which are probably linked by disulfide bonds. Interacts with MAML1, MAML2 and MAML3 which act as transcriptional coactivators for NOTCH2. Interacts with RELA/p65. Interacts with HIF1AN. Interacts (via ANK repeats) with TCIM, the interaction inhibits the nuclear translocation of NOTCH2 N2ICD. Interacts with CUL1, RBX1, SKP1 and FBXW7 that are SCF(FBXW7) E3 ubiquitin-protein ligase complex components. Interacts with MINAR1; this interaction increases MINAR1 stability and function. Interacts with NOTCH2NL (NOTCH2NLA, NOTCH2NLB and/or NOTCH2NLC); leading to enhance Notch signaling pathway in a non-cell-autonomous manner. Interacts with MDK; this interaction mediates a nuclear accumulation of NOTCH2 and therefore activation of NOTCH2 signaling leading to interaction between HES1 and STAT3. Interacts with MINAR2. Synthesized in the endoplasmic reticulum as an inactive form which is proteolytically cleaved by a furin-like convertase in the trans-Golgi network before it reaches the plasma membrane to yield an active, ligand-accessible form. Cleavage results in a C-terminal fragment N(TM) and a N-terminal fragment N(EC). Following ligand binding, it is cleaved by TNF-alpha converting enzyme (TACE) to yield a membrane-associated intermediate fragment called notch extracellular truncation (NEXT). This fragment is then cleaved by presenilin dependent gamma-secretase to release a notch-derived peptide containing the intracellular domain (NICD) from the membrane. Post-translationally, hydroxylated by HIF1AN. In terms of processing, can be either O-glucosylated or O-xylosylated at Ser-613 by POGLUT1. Phosphorylated by GSK3. GSK3-mediated phosphorylation is necessary for NOTCH2 recognition by FBXW7, ubiquitination and degradation via the ubiquitin proteasome pathway. As to expression, expressed in the brain, heart, kidney, lung, skeletal muscle and liver. Ubiquitously expressed in the embryo.

It localises to the cell membrane. Its subcellular location is the nucleus. The protein localises to the cytoplasm. Functionally, functions as a receptor for membrane-bound ligands Jagged-1 (JAG1), Jagged-2 (JAG2) and Delta-1 (DLL1) to regulate cell-fate determination. Upon ligand activation through the released notch intracellular domain (NICD) it forms a transcriptional activator complex with RBPJ/RBPSUH and activates genes of the enhancer of split locus. Affects the implementation of differentiation, proliferation and apoptotic programs. Involved in bone remodeling and homeostasis. In collaboration with RELA/p65 enhances NFATc1 promoter activity and positively regulates RANKL-induced osteoclast differentiation. Positively regulates self-renewal of liver cancer cells. In Homo sapiens (Human), this protein is Neurogenic locus notch homolog protein 2.